We begin with the raw amino-acid sequence, 156 residues long: E3 ubiquitin-protein ligase LAP (156 aa).

The segment at 1–55 adopts an RING-CH-type zinc-finger fold; that stretch reads MSDICWICNDVCDERNNFCGCNEEYKVVHIKCMQLWINYSKKKECNLCKTKYNIK. Over 1–73 the chain is Cytoplasmic; that stretch reads MSDICWICND…WNWCFNDKKT (73 aa). 8 residues coordinate Zn(2+): C5, C8, C19, C21, H29, C32, C45, and C48. A helical membrane pass occupies residues 74-94; the sequence is TLFKIFFILFALVFIFLTITL. Residues 95–111 lie on the Lumenal side of the membrane; it reads SNDMANLVTGINDLICS. The chain crosses the membrane as a helical span at residues 112–132; it reads IIFLIVYTVVMLTSICFSVFV. The Cytoplasmic segment spans residues 133 to 156; sequence VAIVVDFLLEAKEKNSFLTIREIV.

This sequence belongs to the poxviridae LAP protein family.

It is found in the host membrane. The protein localises to the host Golgi apparatus. Its subcellular location is the host trans-Golgi network membrane. The protein resides in the host early endosome membrane. The enzyme catalyses S-ubiquitinyl-[E2 ubiquitin-conjugating enzyme]-L-cysteine + [acceptor protein]-L-lysine = [E2 ubiquitin-conjugating enzyme]-L-cysteine + N(6)-ubiquitinyl-[acceptor protein]-L-lysine.. In terms of biological role, E3 ubiquitin-protein ligase which promotes ubiquitination and subsequent degradation of host MHC-I and CD4 molecules, presumably to prevent lysis of infected cells by cytotoxic T-lymphocytes and NK cell. Binds target molecules through transmembrane interaction. The result of this ubiquitination is the enhancement of the endocytosis of the target chain and the delivery to the lysosome, where it is proteolytically destroyed. This Yaba-like disease virus (YLDV) protein is E3 ubiquitin-protein ligase LAP.